The chain runs to 76 residues: Omega-agatoxin-Aa3a (76 aa).

6 disulfide bridges follow: C2–C19, C9–C25, C16–C52, C18–C40, C27–C38, and C59–C67.

It belongs to the neurotoxin 04 (omega-agtx) family. 03 (type II/III omega-agtx) subfamily. In terms of tissue distribution, expressed by the venom gland.

It localises to the secreted. Functionally, omega-agatoxin are antagonist of voltage-gated calcium channels. They block insect neuromuscular transmission presynaptically. Potent blocker of N- (Cav2.2/CACNA1B) and L-type (Cav1/CACNA1) calcium channels. This chain is Omega-agatoxin-Aa3a, found in Agelenopsis aperta (North American funnel-web spider).